The chain runs to 415 residues: Multidrug resistance protein MdtA (415 aa).

The N-terminal stretch at 1–21 is a signal peptide; it reads MKGSYKSRWVIVIVVVIAAIA. Positions 31 to 47 are enriched in polar residues; sequence DSQSAAPGATKQAQQSP. Disordered stretches follow at residues 31-60 and 392-415; these read DSQSAAPGATKQAQQSPAGGRRGMRSGPLA and EAQSATTPEEKATSREYAKKGARS. A compositionally biased stretch (basic and acidic residues) spans 399-415; the sequence is PEEKATSREYAKKGARS.

This sequence belongs to the membrane fusion protein (MFP) (TC 8.A.1) family. As to quaternary structure, part of a tripartite efflux system composed of MdtA, MdtB and MdtC.

It localises to the cell inner membrane. Its function is as follows. The MdtABC tripartite complex confers resistance against novobiocin and deoxycholate. This Escherichia coli O157:H7 protein is Multidrug resistance protein MdtA.